The primary structure comprises 199 residues: Protein extra-macrochaetae (199 aa).

In terms of domain architecture, bHLH spans 23–75 (RIQRHPTHRGDGENAEMKMYLSKLKDLVPFMPKNRKLTKLEIIQHVIDYICDL). Ser106 is modified (phosphoserine). A disordered region spans residues 127 to 199 (RLNAEQPAKV…QNAEKDSRQS (73 aa)). The segment covering 161-182 (QQHQQQQQLQLQQQQLQSQQQL) has biased composition (low complexity).

As to quaternary structure, heterodimer with other HLH proteins.

Its subcellular location is the nucleus. Functionally, participates in sensory organ patterning by antagonizing the neurogenic activity of the Achaete-scute complex (AS-C). It lacks a basic DNA-binding domain but is able to form heterodimers with other HLH proteins, thereby inhibiting DNA binding. May sequester proneural proteins in complexes inefficient for DNA interaction. EMC also affects vein differentiation. Inhibits the activity of AS-C proteins by forming an non-DNA binding heterodimer. This Drosophila melanogaster (Fruit fly) protein is Protein extra-macrochaetae (emc).